A 420-amino-acid chain; its full sequence is MAASVQPACLDLHFSGKHPPLLKHNAIIVRCVSSPNVIPEADSISGPPDIINTNRDQRKVVRIAWEKLVRWSRSLRAKAKTDVLERTRKVVVLGGGSFGTAMAAHVARRKEGLEVNMLVRDSFVCQSINENHHNCKYFPEHKLPENVIATTDAKAALLDADYCLHAVPVQFSSSFLEGIADYVDPGLPFISLSKGLELNTLRMMSQIIPIALKNPRQPFVALSGPSFALELMNNLPTAMVVASKDKKLANAVQQLLASSYLRINTSSDVTGVEIAGALKNVLAIAAGIVDGMNLGNNSMAALVSQGCSEIRWLATKMGAKPTTITGLSGTGDIMLTCFVNLSRNRTVGVRLGSGETLDDILTSMNQVAEGVATAGAVIALAQKYNVKLPVLTAVAKIIDNELTPTKAVLELMNLPQIEEV.

Residues 1-45 (MAASVQPACLDLHFSGKHPPLLKHNAIIVRCVSSPNVIPEADSIS) constitute a chloroplast transit peptide. NAD(+) contacts are provided by residues 94–99 (GGGSFG), phenylalanine 171, lysine 194, and alanine 228. Lysine 194 is a substrate binding site. Lysine 279 acts as the Proton acceptor in catalysis. 2 residues coordinate NAD(+): arginine 343 and glutamate 369. A substrate-binding site is contributed by 343–344 (RN).

This sequence belongs to the NAD-dependent glycerol-3-phosphate dehydrogenase family.

It is found in the plastid. Its subcellular location is the chloroplast. It carries out the reaction sn-glycerol 3-phosphate + NAD(+) = dihydroxyacetone phosphate + NADH + H(+). Its pathway is membrane lipid metabolism; glycerophospholipid metabolism. Functionally, required to supply glycerol-3-phosphate in the chloroplast for the synthesis of glycerolipids. Required for activation of systemic acquired resistance (SAR). Provision of glycerol-3-phosphate may be involved in generating lipid signals necessary for mediating defense responses and SAR. The polypeptide is Glycerol-3-phosphate dehydrogenase [NAD(+)] 2, chloroplastic (GLY1) (Arabidopsis thaliana (Mouse-ear cress)).